We begin with the raw amino-acid sequence, 372 residues long: Spermidine/putrescine import ATP-binding protein PotA (372 aa).

The ABC transporter domain maps to 11–241 (IELRSIKKSY…PANLFVARFI (231 aa)). 43–50 (GPSGCGKT) contributes to the ATP binding site.

Belongs to the ABC transporter superfamily. Spermidine/putrescine importer (TC 3.A.1.11.1) family. As to quaternary structure, the complex is composed of two ATP-binding proteins (PotA), two transmembrane proteins (PotB and PotC) and a solute-binding protein (PotD).

It is found in the cell inner membrane. It carries out the reaction ATP + H2O + polyamine-[polyamine-binding protein]Side 1 = ADP + phosphate + polyamineSide 2 + [polyamine-binding protein]Side 1.. In terms of biological role, part of the ABC transporter complex PotABCD involved in spermidine/putrescine import. Responsible for energy coupling to the transport system. The sequence is that of Spermidine/putrescine import ATP-binding protein PotA from Haemophilus influenzae (strain ATCC 51907 / DSM 11121 / KW20 / Rd).